The primary structure comprises 305 residues: Type II secretion system protein C (305 aa).

Topologically, residues 1–29 (MEFKQLPPLAAWPRLLSQNTLRWQKPISE) are cytoplasmic. Residues 30-50 (GLTLLLLVASAWTLGKMVWVV) traverse the membrane as a helical segment. The Periplasmic portion of the chain corresponds to 51-305 (SAEQTPVPTW…GQQHDVYIQF (255 aa)).

This sequence belongs to the GSP C family.

The protein resides in the cell inner membrane. Its function is as follows. Involved in a type II secretion system (T2SS, formerly general secretion pathway, GSP) for the export of proteins. Required for secretion of cholera toxin through the outer membrane. This is Type II secretion system protein C (epsC) from Vibrio cholerae serotype O1 (strain ATCC 39315 / El Tor Inaba N16961).